The sequence spans 1206 residues: Pre-mRNA-splicing factor prp12 (1206 aa).

Belongs to the RSE1 family. Belongs to the 40S cdc5-associated complex (or cwf complex), a spliceosome sub-complex reminiscent of a late-stage spliceosome composed of the U2, U5 and U6 snRNAs and at least brr2, cdc5, cwf2/prp3, cwf3/syf1, cwf4/syf3, cwf5/ecm2, spp42/cwf6, cwf7/spf27, cwf8, cwf9, cwf10, cwf11, cwf12, prp45/cwf13, cwf14, cwf15, cwf16, cwf17, cwf18, cwf19, cwf20, cwf21, cwf22, cwf23, cwf24, cwf25, cwf26, cyp7/cwf27, cwf28, cwf29/ist3, lea1, msl1, prp5/cwf1, prp10, prp12/sap130, prp17, prp22, sap61, sap62, sap114, sap145, slu7, smb1, smd1, smd3, smf1, smg1 and syf2.

The protein resides in the nucleus. In terms of biological role, involved in mRNA splicing and G2/M transition. The chain is Pre-mRNA-splicing factor prp12 (prp12) from Schizosaccharomyces pombe (strain 972 / ATCC 24843) (Fission yeast).